We begin with the raw amino-acid sequence, 212 residues long: Nucleoredoxin-like protein 1 (212 aa).

In terms of domain architecture, Thioredoxin spans M1–Q164. A disordered region spans residues A191–F212. Residues D197–F212 are compositionally biased toward gly residues.

This sequence belongs to the nucleoredoxin family. In terms of assembly, interacts with isoform 1 of BSG.

It is found in the cell projection. Its subcellular location is the cilium. The protein localises to the photoreceptor outer segment. Its function is as follows. Plays an important role in retinal cone photoreceptor survival. In association with glucose transporter SLC16A1/GLUT1 and BSG, promotes retinal cone survival by enhancing aerobic glycolysis and accelerating the entry of glucose into photoreceptors. May play a role in cone cell viability, slowing down cone degeneration, does not seem to play a role in degenerating rods. This is Nucleoredoxin-like protein 1 (NXNL1) from Homo sapiens (Human).